A 179-amino-acid polypeptide reads, in one-letter code: Cellular nucleic acid-binding protein homolog (179 aa).

CCHC-type zinc fingers lie at residues 17-34 (PRCY…ECTK), 36-53 (SICY…ECTE), 58-75 (KTCY…DCPS), 83-100 (AECY…DCRT), 116-133 (MNCY…DCTM), 135-152 (VKCY…ECQQ), and 157-174 (QLCY…NCTS).

It to human CNBP and to retroviral nucleic acid binding proteins (NBP). In terms of processing, phosphorylated.

Its subcellular location is the nucleus. In terms of biological role, acts in the sexual differentiation pathway. Is required for efficient conjugation. Double-stranded DNA-binding protein. The sequence is that of Cellular nucleic acid-binding protein homolog (byr3) from Schizosaccharomyces pombe (strain 972 / ATCC 24843) (Fission yeast).